Reading from the N-terminus, the 447-residue chain is N-succinylarginine dihydrolase (447 aa).

Substrate is bound by residues 19–28 (AGLSFGNEAS), asparagine 110, and 137–138 (HR). Glutamate 174 is an active-site residue. Residue arginine 212 coordinates substrate. Histidine 248 is an active-site residue. 2 residues coordinate substrate: aspartate 250 and asparagine 359. Cysteine 365 acts as the Nucleophile in catalysis.

The protein belongs to the succinylarginine dihydrolase family. In terms of assembly, homodimer.

It carries out the reaction N(2)-succinyl-L-arginine + 2 H2O + 2 H(+) = N(2)-succinyl-L-ornithine + 2 NH4(+) + CO2. The protein operates within amino-acid degradation; L-arginine degradation via AST pathway; L-glutamate and succinate from L-arginine: step 2/5. Catalyzes the hydrolysis of N(2)-succinylarginine into N(2)-succinylornithine, ammonia and CO(2). This is N-succinylarginine dihydrolase from Salmonella heidelberg (strain SL476).